The chain runs to 160 residues: Transcription elongation factor GreA (160 aa).

The stretch at 12–76 (EGVKKLEEEL…QLENMLKNAS (65 aa)) forms a coiled coil.

It belongs to the GreA/GreB family.

Its function is as follows. Necessary for efficient RNA polymerase transcription elongation past template-encoded arresting sites. The arresting sites in DNA have the property of trapping a certain fraction of elongating RNA polymerases that pass through, resulting in locked ternary complexes. Cleavage of the nascent transcript by cleavage factors such as GreA or GreB allows the resumption of elongation from the new 3'terminus. GreA releases sequences of 2 to 3 nucleotides. This is Transcription elongation factor GreA from Clostridium botulinum (strain Kyoto / Type A2).